A 111-amino-acid chain; its full sequence is MAKQEKQPKSARQKIRIRLKGYDQRLLDRSTGDIVETAKRTGAAIAGPIPLPTSCEKFTVLRSPNIDRKSREQFEIRTHRRLIDILNPTSKTIDALKTLTLPAGVDIKIKA.

Belongs to the universal ribosomal protein uS10 family. In terms of assembly, part of the 30S ribosomal subunit.

Functionally, involved in the binding of tRNA to the ribosomes. The chain is Small ribosomal subunit protein uS10 from Protochlamydia amoebophila (strain UWE25).